The primary structure comprises 231 residues: NADH-ubiquinone oxidoreductase chain 4 (231 aa).

A run of 7 helical transmembrane segments spans residues 1–21, 34–54, 63–85, 89–111, 128–148, 169–189, and 211–231; these read PIAG…YGII, MFLP…LTCL, IAYS…TPWG, AMAL…NTTY, ILPM…ATPP, TIIL…HMFL, and LLMA…ELII.

The protein belongs to the complex I subunit 4 family.

The protein localises to the mitochondrion membrane. The catalysed reaction is a ubiquinone + NADH + 5 H(+)(in) = a ubiquinol + NAD(+) + 4 H(+)(out). Its function is as follows. Core subunit of the mitochondrial membrane respiratory chain NADH dehydrogenase (Complex I) that is believed to belong to the minimal assembly required for catalysis. Complex I functions in the transfer of electrons from NADH to the respiratory chain. The immediate electron acceptor for the enzyme is believed to be ubiquinone. The chain is NADH-ubiquinone oxidoreductase chain 4 (MT-ND4) from Cerrophidion godmani (Porthidium godmani).